We begin with the raw amino-acid sequence, 347 residues long: Gamma-glutamyl hydrolase 2 (347 aa).

The signal sequence occupies residues 1 to 22; it reads MWSYVWLPLVALSLFKDSIIMA. Residues 45 to 341 form the Gamma-glutamyl hydrolase domain; that stretch reads APDPNLNYRP…IGYDEVYIFT (297 aa). Cys-155 (nucleophile) is an active-site residue. His-268 (proton donor) is an active-site residue.

The protein belongs to the peptidase C26 family. In terms of tissue distribution, expressed in roots, in leaves, stems and siliques.

It is found in the vacuole. It localises to the secreted. Its subcellular location is the extracellular space. The protein resides in the cell wall. The enzyme catalyses (6S)-5,6,7,8-tetrahydrofolyl-(gamma-L-Glu)(n) + (n-1) H2O = (6S)-5,6,7,8-tetrahydrofolate + (n-1) L-glutamate. Its function is as follows. Cleaves the polyglutamate sidechains of folate polyglutamates in the vacuole. Is important for polyglutamyl tail length determination before vacuolar exit. Plays a role on folate stability and intracellular folate content. Has endopeptidase activity against 4-amino-10-methylpteroyl penta-, tetra-, tri- and di-gamma-L-glutamate substrates and is responsible for the production of folic acid, also called pteroylglutamic acid (PteGlu) from teroylpolyglutamates. The polypeptide is Gamma-glutamyl hydrolase 2 (GGH2) (Arabidopsis thaliana (Mouse-ear cress)).